The primary structure comprises 516 residues: Arginyl-tRNA--protein transferase 1 (516 aa).

Positions 150–180 (IESEEKEKEKSIKKEGSKEFIHPQSIEEKLG) are enriched in basic and acidic residues. Residues 150-206 (IESEEKEKEKSIKKEGSKEFIHPQSIEEKLGSGEPSHPIKVHIGPKPGKGADLSKPP) form a disordered region.

The protein belongs to the R-transferase family. As to quaternary structure, monomer. Interacts with LIAT1; LIAT1 is not a substrate of ATE1, the interaction takes place in the cytoplasm and seems to increase ATE1 arginyltransferase activity. Interacts with LIAT1; has a higher affinity than the other isoforms. In terms of tissue distribution, widely expressed.

It localises to the nucleus. It is found in the cytoplasm. It carries out the reaction an N-terminal L-alpha-aminoacyl-[protein] + L-arginyl-tRNA(Arg) = an N-terminal L-arginyl-L-aminoacyl-[protein] + tRNA(Arg) + H(+). Involved in the post-translational conjugation of arginine to the N-terminal aspartate or glutamate of a protein. This arginylation is required for degradation of the protein via the ubiquitin pathway. Does not arginylate cysteine residues. In Mus musculus (Mouse), this protein is Arginyl-tRNA--protein transferase 1.